The chain runs to 204 residues: UPF0134 protein MPN_655 (204 aa).

A disordered region spans residues 46-132 (EVENKPKIPI…FNEFKDSNNQ (87 aa)). A compositionally biased stretch (pro residues) spans 64–80 (SPKPLKPPKPPKPPKGP). The span at 117-132 (YVTRKEFNEFKDSNNQ) shows a compositional bias: basic and acidic residues.

This sequence belongs to the UPF0134 family.

The polypeptide is UPF0134 protein MPN_655 (Mycoplasma pneumoniae (strain ATCC 29342 / M129 / Subtype 1) (Mycoplasmoides pneumoniae)).